Here is a 396-residue protein sequence, read N- to C-terminus: Argininosuccinate synthase (396 aa).

9-17 (AYSGGLDTS) contributes to the ATP binding site. An L-citrulline-binding site is contributed by Y85. ATP is bound at residue G115. The L-aspartate site is built by T117, N121, and D122. L-citrulline is bound at residue N121. L-citrulline is bound by residues R125, S173, E258, and Y270.

This sequence belongs to the argininosuccinate synthase family. Type 1 subfamily. As to quaternary structure, homotetramer.

The protein localises to the cytoplasm. It carries out the reaction L-citrulline + L-aspartate + ATP = 2-(N(omega)-L-arginino)succinate + AMP + diphosphate + H(+). Its pathway is amino-acid biosynthesis; L-arginine biosynthesis; L-arginine from L-ornithine and carbamoyl phosphate: step 2/3. This Streptococcus agalactiae serotype Ia (strain ATCC 27591 / A909 / CDC SS700) protein is Argininosuccinate synthase.